A 172-amino-acid polypeptide reads, in one-letter code: MASKWNWSGTKGRRTPRRPYGRPYKSSVPTTRVVVHQSAVLKKDEVVGTEIKPEGDVARYKMKKVMLTCTLRMAPGELVNYLIVKCNSPISSWSAAFTSPALLVKESCQDMITIIAKGKVESTGVAGTDCTKSFNRFIKLGAGITQTQHLYVVLYTSVALKAVLEHRVYVEV.

The segment at 1–26 (MASKWNWSGTKGRRTPRRPYGRPYKS) is disordered. Residues 11–20 (KGRRTPRRPY) show a composition bias toward basic residues.

Belongs to the nanoviridae capsid protein family.

It is found in the virion. This is Capsid protein (DNA-S) from Faba bean necrotic yellows virus (isolate Syrian SV292-88) (FBNYV).